The primary structure comprises 469 residues: Aspartyl/glutamyl-tRNA(Asn/Gln) amidotransferase subunit B (469 aa).

It belongs to the GatB/GatE family. GatB subfamily. Heterotrimer of A, B and C subunits.

It catalyses the reaction L-glutamyl-tRNA(Gln) + L-glutamine + ATP + H2O = L-glutaminyl-tRNA(Gln) + L-glutamate + ADP + phosphate + H(+). It carries out the reaction L-aspartyl-tRNA(Asn) + L-glutamine + ATP + H2O = L-asparaginyl-tRNA(Asn) + L-glutamate + ADP + phosphate + 2 H(+). In terms of biological role, allows the formation of correctly charged Asn-tRNA(Asn) or Gln-tRNA(Gln) through the transamidation of misacylated Asp-tRNA(Asn) or Glu-tRNA(Gln) in organisms which lack either or both of asparaginyl-tRNA or glutaminyl-tRNA synthetases. The reaction takes place in the presence of glutamine and ATP through an activated phospho-Asp-tRNA(Asn) or phospho-Glu-tRNA(Gln). The chain is Aspartyl/glutamyl-tRNA(Asn/Gln) amidotransferase subunit B from Thermus thermophilus (strain ATCC 27634 / DSM 579 / HB8).